The primary structure comprises 330 residues: DNA-directed RNA polymerase subunit alpha (330 aa).

The alpha N-terminal domain (alpha-NTD) stretch occupies residues 1–236; that stretch reads MQGSVTEFLK…EQLDAFVDLR (236 aa). Residues 250-330 form an alpha C-terminal domain (alpha-CTD) region; sequence FDPILLRPVD…NWPPASIAED (81 aa).

The protein belongs to the RNA polymerase alpha chain family. In terms of assembly, homodimer. The RNAP catalytic core consists of 2 alpha, 1 beta, 1 beta' and 1 omega subunit. When a sigma factor is associated with the core the holoenzyme is formed, which can initiate transcription.

The catalysed reaction is RNA(n) + a ribonucleoside 5'-triphosphate = RNA(n+1) + diphosphate. DNA-dependent RNA polymerase catalyzes the transcription of DNA into RNA using the four ribonucleoside triphosphates as substrates. This Vibrio campbellii (strain ATCC BAA-1116) protein is DNA-directed RNA polymerase subunit alpha.